Consider the following 559-residue polypeptide: ADP,ATP carrier protein 1 (559 aa).

A compositionally biased stretch (polar residues) spans 1-10 (MNEVENNNHS). A disordered region spans residues 1 to 22 (MNEVENNNHSFPREDIPTEDEI). Residue Asn8 is glycosylated (N-linked (GlcNAc...) asparagine). 4 helical membrane-spanning segments follow: residues 46-66 (FALL…MRIL), 79-99 (TILF…VFLI), 111-131 (IFSI…AVFL), and 174-194 (IVFI…FLSF). Asn196 carries N-linked (GlcNAc...) asparagine glycosylation. The next 2 membrane-spanning stretches (helical) occupy residues 210-230 (PLII…GAFF) and 242-262 (QVLL…VIFL). N-linked (GlcNAc...) asparagine glycosylation is present at Asn290. The next 3 helical transmembrane spans lie at 305–325 (LLLA…MVES), 354–373 (QYMT…SSYV), and 377–397 (GFLL…VLFL). Asn403 is a glycosylation site (N-linked (GlcNAc...) asparagine). The next 3 membrane-spanning stretches (helical) occupy residues 425-447 (YVLE…YSAF), 473-493 (IFGK…FEAL), and 503-523 (PITA…IIYL).

The protein belongs to the ADP/ATP translocase tlc family.

It localises to the cell membrane. Functionally, ATP transporter involved in the uptake of ATP from the host cell cytoplasm. Provides the microsporidian cell with host ATP in exchange for ADP. This is an obligate exchange system. This energy acquiring activity is an important component of microsporidian parasitism. This Encephalitozoon cuniculi (strain GB-M1) (Microsporidian parasite) protein is ADP,ATP carrier protein 1 (NTT1).